We begin with the raw amino-acid sequence, 119 residues long: Large ribosomal subunit protein uL24 (119 aa).

This sequence belongs to the universal ribosomal protein uL24 family. In terms of assembly, part of the 50S ribosomal subunit.

Functionally, one of two assembly initiator proteins, it binds directly to the 5'-end of the 23S rRNA, where it nucleates assembly of the 50S subunit. Its function is as follows. One of the proteins that surrounds the polypeptide exit tunnel on the outside of the subunit. This chain is Large ribosomal subunit protein uL24, found in Clavibacter michiganensis subsp. michiganensis (strain NCPPB 382).